Here is a 72-residue protein sequence, read N- to C-terminus: Protein kish-A (72 aa).

An N-terminal signal peptide occupies residues 1–26 (MSAIFNFQSLLTVILLLICTCAYIRS). Over 27–53 (LAPSLLDKNKSGLLGIFWKCARIGERK) the chain is Extracellular. An N-linked (GlcNAc...) asparagine glycan is attached at Asn35. Residues 54 to 71 (SPYVAVCCVVMAFSILFM) form a helical membrane-spanning segment. Gln72 is a topological domain (cytoplasmic).

Belongs to the KISH family.

It localises to the golgi apparatus membrane. Functionally, involved in the early part of the secretory pathway. The protein is Protein kish-A (TMEM167A) of Taeniopygia guttata (Zebra finch).